The following is a 396-amino-acid chain: Protein Njmu-R1 (396 aa).

The tract at residues 1–78 is disordered; sequence MLPSLQESMD…SGDDFSLSLA (78 aa). 2 positions are modified to phosphoserine: Ser-8 and Ser-18. The segment covering 9–24 has biased composition (acidic residues); it reads MDGDEKELESSEEGGS. Residues 58 to 67 are compositionally biased toward polar residues; that stretch reads GSPSGTNAET.

Component of the complex WDR11 composed of C17orf75, FAM91A1 and WDR11; FAM91A1 and WDR11 are required for proper location of the complex. Interacts with TBC1D23; this interaction may be indirect and recruits TBC1D23 to AP-1-derived vesicles. Highly expressed in testis and also expressed in fetal testis.

The protein localises to the golgi apparatus. It is found in the trans-Golgi network. It localises to the cytoplasmic vesicle. In terms of biological role, as component of the WDR11 complex acts together with TBC1D23 to facilitate the golgin-mediated capture of vesicles generated using AP-1. May have a role in spermatogenesis. This Homo sapiens (Human) protein is Protein Njmu-R1 (C17orf75).